A 213-amino-acid polypeptide reads, in one-letter code: Peptidyl-prolyl cis-trans isomerase B (213 aa).

The N-terminal stretch at 1 to 23 (MAVLRVLCGLLLVSILFLGFVLS) is a signal peptide. In terms of domain architecture, PPIase cyclophilin-type spans 35–197 (FFDIEVDEQP…KSVKIANCGH (163 aa)). A Prevents secretion from ER motif is present at residues 210 to 213 (DAAE).

It belongs to the cyclophilin-type PPIase family. PPIase B subfamily.

The protein resides in the endoplasmic reticulum lumen. The catalysed reaction is [protein]-peptidylproline (omega=180) = [protein]-peptidylproline (omega=0). With respect to regulation, inhibited by cyclosporin A (CsA). PPIases accelerate the folding of proteins. It catalyzes the cis-trans isomerization of proline imidic peptide bonds in oligopeptides. This chain is Peptidyl-prolyl cis-trans isomerase B, found in Schistosoma japonicum (Blood fluke).